The sequence spans 334 residues: Glyceraldehyde-3-phosphate dehydrogenase (334 aa).

NAD(+) contacts are provided by residues T12–I13 and G111. Residue S140–N142 participates in D-glyceraldehyde 3-phosphate binding. The active-site Nucleophile is the C141. R167 lines the NAD(+) pocket. H192 to G193 serves as a coordination point for D-glyceraldehyde 3-phosphate. Q298 lines the NAD(+) pocket.

Belongs to the glyceraldehyde-3-phosphate dehydrogenase family. Homotetramer.

It is found in the cytoplasm. The catalysed reaction is D-glyceraldehyde 3-phosphate + phosphate + NADP(+) = (2R)-3-phospho-glyceroyl phosphate + NADPH + H(+). It carries out the reaction D-glyceraldehyde 3-phosphate + phosphate + NAD(+) = (2R)-3-phospho-glyceroyl phosphate + NADH + H(+). It participates in carbohydrate degradation; glycolysis; pyruvate from D-glyceraldehyde 3-phosphate: step 1/5. The sequence is that of Glyceraldehyde-3-phosphate dehydrogenase from Thermococcus onnurineus (strain NA1).